The chain runs to 444 residues: Methylenetetrahydrofolate--tRNA-(uracil-5-)-methyltransferase TrmFO (444 aa).

10–15 (GAGLAG) lines the FAD pocket.

The protein belongs to the MnmG family. TrmFO subfamily. Requires FAD as cofactor.

It localises to the cytoplasm. The catalysed reaction is uridine(54) in tRNA + (6R)-5,10-methylene-5,6,7,8-tetrahydrofolate + NADH + H(+) = 5-methyluridine(54) in tRNA + (6S)-5,6,7,8-tetrahydrofolate + NAD(+). The enzyme catalyses uridine(54) in tRNA + (6R)-5,10-methylene-5,6,7,8-tetrahydrofolate + NADPH + H(+) = 5-methyluridine(54) in tRNA + (6S)-5,6,7,8-tetrahydrofolate + NADP(+). Catalyzes the folate-dependent formation of 5-methyl-uridine at position 54 (M-5-U54) in all tRNAs. In Streptococcus suis (strain 98HAH33), this protein is Methylenetetrahydrofolate--tRNA-(uracil-5-)-methyltransferase TrmFO.